The following is a 251-amino-acid chain: Imidazole glycerol phosphate synthase subunit HisF (251 aa).

Residues aspartate 11 and aspartate 130 contribute to the active site.

Belongs to the HisA/HisF family. Heterodimer of HisH and HisF.

It is found in the cytoplasm. The catalysed reaction is 5-[(5-phospho-1-deoxy-D-ribulos-1-ylimino)methylamino]-1-(5-phospho-beta-D-ribosyl)imidazole-4-carboxamide + L-glutamine = D-erythro-1-(imidazol-4-yl)glycerol 3-phosphate + 5-amino-1-(5-phospho-beta-D-ribosyl)imidazole-4-carboxamide + L-glutamate + H(+). It participates in amino-acid biosynthesis; L-histidine biosynthesis; L-histidine from 5-phospho-alpha-D-ribose 1-diphosphate: step 5/9. Functionally, IGPS catalyzes the conversion of PRFAR and glutamine to IGP, AICAR and glutamate. The HisF subunit catalyzes the cyclization activity that produces IGP and AICAR from PRFAR using the ammonia provided by the HisH subunit. The sequence is that of Imidazole glycerol phosphate synthase subunit HisF from Listeria welshimeri serovar 6b (strain ATCC 35897 / DSM 20650 / CCUG 15529 / CIP 8149 / NCTC 11857 / SLCC 5334 / V8).